The primary structure comprises 323 residues: Ribonuclease Z (323 aa).

Zn(2+) contacts are provided by histidine 62, histidine 64, aspartate 66, histidine 67, histidine 140, aspartate 211, and histidine 270. The active-site Proton acceptor is aspartate 66.

The protein belongs to the RNase Z family. As to quaternary structure, homodimer. Zn(2+) serves as cofactor.

It carries out the reaction Endonucleolytic cleavage of RNA, removing extra 3' nucleotides from tRNA precursor, generating 3' termini of tRNAs. A 3'-hydroxy group is left at the tRNA terminus and a 5'-phosphoryl group is left at the trailer molecule.. Functionally, zinc phosphodiesterase, which displays some tRNA 3'-processing endonuclease activity. Probably involved in tRNA maturation, by removing a 3'-trailer from precursor tRNA. In Marinobacter nauticus (strain ATCC 700491 / DSM 11845 / VT8) (Marinobacter aquaeolei), this protein is Ribonuclease Z.